Reading from the N-terminus, the 419-residue chain is Tyrosine--tRNA ligase (419 aa).

Residue Tyr-34 coordinates L-tyrosine. Positions 39-48 match the 'HIGH' region motif; it reads PSGDSMHIGH. Tyr-168 and Gln-172 together coordinate L-tyrosine. The 'KMSKS' region motif lies at 230–234; the sequence is KFGKS. Lys-233 is a binding site for ATP. The 67-residue stretch at 352–418 folds into the S4 RNA-binding domain; that stretch reads VNLVDWLVSL…GKKKYFLVSY (67 aa).

The protein belongs to the class-I aminoacyl-tRNA synthetase family. TyrS type 1 subfamily. In terms of assembly, homodimer.

It localises to the cytoplasm. The enzyme catalyses tRNA(Tyr) + L-tyrosine + ATP = L-tyrosyl-tRNA(Tyr) + AMP + diphosphate + H(+). In terms of biological role, catalyzes the attachment of tyrosine to tRNA(Tyr) in a two-step reaction: tyrosine is first activated by ATP to form Tyr-AMP and then transferred to the acceptor end of tRNA(Tyr). The protein is Tyrosine--tRNA ligase of Listeria welshimeri serovar 6b (strain ATCC 35897 / DSM 20650 / CCUG 15529 / CIP 8149 / NCTC 11857 / SLCC 5334 / V8).